Reading from the N-terminus, the 647-residue chain is DNA mismatch repair protein MutL (647 aa).

Residues Val393 to Tyr423 form a disordered region. The segment covering Arg409–Tyr423 has biased composition (basic and acidic residues).

Belongs to the DNA mismatch repair MutL/HexB family.

Functionally, this protein is involved in the repair of mismatches in DNA. It is required for dam-dependent methyl-directed DNA mismatch repair. May act as a 'molecular matchmaker', a protein that promotes the formation of a stable complex between two or more DNA-binding proteins in an ATP-dependent manner without itself being part of a final effector complex. This chain is DNA mismatch repair protein MutL, found in Streptococcus thermophilus (strain CNRZ 1066).